Here is a 254-residue protein sequence, read N- to C-terminus: tRNA (guanine-N(1)-)-methyltransferase (254 aa).

Residues glycine 117 and 136–141 (LGDFVL) each bind S-adenosyl-L-methionine.

This sequence belongs to the RNA methyltransferase TrmD family. As to quaternary structure, homodimer.

The protein resides in the cytoplasm. It catalyses the reaction guanosine(37) in tRNA + S-adenosyl-L-methionine = N(1)-methylguanosine(37) in tRNA + S-adenosyl-L-homocysteine + H(+). Specifically methylates guanosine-37 in various tRNAs. The polypeptide is tRNA (guanine-N(1)-)-methyltransferase (Levilactobacillus brevis (strain ATCC 367 / BCRC 12310 / CIP 105137 / JCM 1170 / LMG 11437 / NCIMB 947 / NCTC 947) (Lactobacillus brevis)).